A 466-amino-acid polypeptide reads, in one-letter code: MIPVKGFAGANVAVLGLGRSGLATARALRAGGAEALCWDDNPAAREAAEGEGFTIRDLRKQGVRDDTACLIVSPGIPHLYPAPNPVVAAALEAGVPVDNDIGLFFRSFAGPEWDGFDTLPRVVAVTGSNGKSTTSALIHHILSEAGRPVQLAGNIGRGVLDIEPGEEGSVVVLELSSYQTDLARALTPDVAVFTNLSPDHLDRHGGMGGYFAAKRRLFAEGGPDRAVIGVDESEGLYLAGQMSEGPGDDRVIRVSVSRKLTGPGWQVFARKGYLSEYRKGRQAGSIDLRDIRGLPGAHNHQNACAAYAACRALGLSPKAIEAGMRSYPGLPHRSQIVAEAGGVTYVNDSKATNVDAALKALGAFKRIRWICGGLQKEGGIAALNGGLAEVLKAYVIGREAAGFALQLEVESEVCTTMDEAVARAMAEAEPGDTVLLAPAAASFDQYDNFERRGEDFMAEVQKRLDG.

127 to 133 (GSNGKST) lines the ATP pocket.

It belongs to the MurCDEF family.

It is found in the cytoplasm. The enzyme catalyses UDP-N-acetyl-alpha-D-muramoyl-L-alanine + D-glutamate + ATP = UDP-N-acetyl-alpha-D-muramoyl-L-alanyl-D-glutamate + ADP + phosphate + H(+). It functions in the pathway cell wall biogenesis; peptidoglycan biosynthesis. Its function is as follows. Cell wall formation. Catalyzes the addition of glutamate to the nucleotide precursor UDP-N-acetylmuramoyl-L-alanine (UMA). This Ruegeria pomeroyi (strain ATCC 700808 / DSM 15171 / DSS-3) (Silicibacter pomeroyi) protein is UDP-N-acetylmuramoylalanine--D-glutamate ligase.